Here is a 470-residue protein sequence, read N- to C-terminus: Cell division protein FtsP (470 aa).

Positions 1-27 (MSLSRRQFIQASGIALCAGAVPLKASA) form a signal peptide, tat-type signal. Positions 68-164 (WGINGRYLGP…NGLAGMWLVE (97 aa)) constitute a Plastocyanin-like domain.

This sequence belongs to the FtsP family. Exported by the Tat system. The position of the signal peptide cleavage has been experimentally proven. Can also be exported by the Sec system.

The protein resides in the periplasm. Cell division protein that is required for growth during stress conditions. May be involved in protecting or stabilizing the divisomal assembly under conditions of stress. This Escherichia coli (strain K12) protein is Cell division protein FtsP.